We begin with the raw amino-acid sequence, 125 residues long: Large ribosomal subunit protein bL12 (125 aa).

This sequence belongs to the bacterial ribosomal protein bL12 family. As to quaternary structure, homodimer. Part of the ribosomal stalk of the 50S ribosomal subunit. Forms a multimeric L10(L12)X complex, where L10 forms an elongated spine to which 2 to 4 L12 dimers bind in a sequential fashion. Binds GTP-bound translation factors.

Functionally, forms part of the ribosomal stalk which helps the ribosome interact with GTP-bound translation factors. Is thus essential for accurate translation. This is Large ribosomal subunit protein bL12 from Cereibacter sphaeroides (Rhodobacter sphaeroides).